A 777-amino-acid polypeptide reads, in one-letter code: Lon protease (777 aa).

Positions 11–204 (IPVLPLRDVV…FLMAIMETEI (194 aa)) constitute a Lon N-terminal domain. Residue 356–363 (GPPGVGKT) coordinates ATP. One can recognise a Lon proteolytic domain in the interval 592 to 773 (LNQIGQVVGL…EEVLKIALEN (182 aa)). Catalysis depends on residues serine 679 and lysine 722.

Belongs to the peptidase S16 family. As to quaternary structure, homohexamer. Organized in a ring with a central cavity.

The protein localises to the cytoplasm. It carries out the reaction Hydrolysis of proteins in presence of ATP.. Functionally, ATP-dependent serine protease that mediates the selective degradation of mutant and abnormal proteins as well as certain short-lived regulatory proteins. Required for cellular homeostasis and for survival from DNA damage and developmental changes induced by stress. Degrades polypeptides processively to yield small peptide fragments that are 5 to 10 amino acids long. Binds to DNA in a double-stranded, site-specific manner. In Buchnera aphidicola subsp. Schizaphis graminum (strain Sg), this protein is Lon protease.